A 317-amino-acid polypeptide reads, in one-letter code: Acetyl-coenzyme A carboxylase carboxyl transferase subunit alpha (317 aa).

Residues 39–293 form the CoA carboxyltransferase C-terminal domain; sequence RLESKAAAAL…GDALAEALTG (255 aa).

It belongs to the AccA family. As to quaternary structure, acetyl-CoA carboxylase is a heterohexamer composed of biotin carboxyl carrier protein (AccB), biotin carboxylase (AccC) and two subunits each of ACCase subunit alpha (AccA) and ACCase subunit beta (AccD).

It is found in the cytoplasm. It catalyses the reaction N(6)-carboxybiotinyl-L-lysyl-[protein] + acetyl-CoA = N(6)-biotinyl-L-lysyl-[protein] + malonyl-CoA. It functions in the pathway lipid metabolism; malonyl-CoA biosynthesis; malonyl-CoA from acetyl-CoA: step 1/1. Its function is as follows. Component of the acetyl coenzyme A carboxylase (ACC) complex. First, biotin carboxylase catalyzes the carboxylation of biotin on its carrier protein (BCCP) and then the CO(2) group is transferred by the carboxyltransferase to acetyl-CoA to form malonyl-CoA. The polypeptide is Acetyl-coenzyme A carboxylase carboxyl transferase subunit alpha (Methylobacterium nodulans (strain LMG 21967 / CNCM I-2342 / ORS 2060)).